The sequence spans 262 residues: Hydroxyethylthiazole kinase (262 aa).

M44 lines the substrate pocket. Residues R118 and S166 each coordinate ATP. G193 serves as a coordination point for substrate.

This sequence belongs to the Thz kinase family. It depends on Mg(2+) as a cofactor.

The enzyme catalyses 5-(2-hydroxyethyl)-4-methylthiazole + ATP = 4-methyl-5-(2-phosphooxyethyl)-thiazole + ADP + H(+). It functions in the pathway cofactor biosynthesis; thiamine diphosphate biosynthesis; 4-methyl-5-(2-phosphoethyl)-thiazole from 5-(2-hydroxyethyl)-4-methylthiazole: step 1/1. Catalyzes the phosphorylation of the hydroxyl group of 4-methyl-5-beta-hydroxyethylthiazole (THZ). In Chlamydia abortus (strain DSM 27085 / S26/3) (Chlamydophila abortus), this protein is Hydroxyethylthiazole kinase.